The sequence spans 511 residues: Coatomer subunit delta (511 aa).

Residues 167 to 177 are compositionally biased toward basic and acidic residues; that stretch reads QQARRDAERQG. The segment at 167 to 188 is disordered; the sequence is QQARRDAERQGKKAPGFGGFGS. Serine 223 is modified (phosphoserine). 2 positions are modified to N6-acetyllysine: lysine 233 and lysine 241. Phosphoserine is present on serine 244. The MHD domain maps to 271–511; it reads MESVHMKIEE…TFLVDKYEIL (241 aa). N6-acetyllysine is present on residues lysine 309 and lysine 351. At serine 493 the chain carries Phosphoserine.

The protein belongs to the adaptor complexes medium subunit family. Delta-COP subfamily. In terms of assembly, oligomeric complex that consists of at least the alpha, beta, beta', gamma, delta, epsilon and zeta subunits.

It localises to the cytoplasm. The protein resides in the golgi apparatus membrane. The protein localises to the cytoplasmic vesicle. It is found in the COPI-coated vesicle membrane. The coatomer is a cytosolic protein complex that binds to dilysine motifs and reversibly associates with Golgi non-clathrin-coated vesicles, which further mediate biosynthetic protein transport from the ER, via the Golgi up to the trans Golgi network. Coatomer complex is required for budding from Golgi membranes, and is essential for the retrograde Golgi-to-ER transport of dilysine-tagged proteins. In mammals, the coatomer can only be recruited by membranes associated to ADP-ribosylation factors (ARFs), which are small GTP-binding proteins; the complex also influences the Golgi structural integrity, as well as the processing, activity, and endocytic recycling of LDL receptors. This is Coatomer subunit delta (ARCN1) from Pongo abelii (Sumatran orangutan).